Consider the following 589-residue polypeptide: (E)-beta-ocimene synthase, chloroplastic (589 aa).

The transit peptide at 1-25 (MAAHNLCFNSAFVCNVHHQKTQHFP) directs the protein to the chloroplast. Arg-302, Asp-339, Asp-343, Arg-480, and Asn-483 together coordinate (2E,6E)-farnesyl diphosphate. Positions 339 and 343 each coordinate Mg(2+). Residues 339–343 (DDIYD) carry the DDXXD motif motif. 3 residues coordinate Mg(2+): Asn-483, Thr-487, and Glu-491.

The protein belongs to the terpene synthase family. Tpsb subfamily. The cofactor is Mg(2+). Mn(2+) is required as a cofactor. Expressed exclusively in flowers.

It is found in the plastid. It localises to the chloroplast. The catalysed reaction is (2E,6E)-farnesyl diphosphate = (3E,6E)-alpha-farnesene + diphosphate. The protein operates within secondary metabolite biosynthesis; terpenoid biosynthesis. In terms of biological role, predominantly involved in monoterpene (C10) biosynthesis. Using GPP as substrate, the major product is (E)-beta-ocimene with minor amounts of (Z)-beta-ocimene and myrcene. Using FPP as substrate, could also be able to synthesize in vitro sesquiterpenes (C15) with (E,E)-alpha-farnesene as the major product and with (Z,E)-alpha-farnesene and (E,E)-beta-farnesene as minor products. The protein is (E)-beta-ocimene synthase, chloroplastic (TPS02) of Arabidopsis thaliana (Mouse-ear cress).